The sequence spans 152 residues: Antiholin-like protein LrgA (152 aa).

Transmembrane regions (helical) follow at residues Y23–E43, F45–C65, V77–I97, and I108–S128.

This sequence belongs to the CidA/LrgA family. LrgA subfamily.

It is found in the cell membrane. In terms of biological role, inhibits the expression or activity of extracellular murein hydrolases by interacting, possibly with LrgB, with the holin-like proteins CidA and/or CidB. The LrgAB and CidAB proteins may affect the proton motive force of the membrane. May be involved in programmed cell death (PCD), possibly triggering PCD in response to antibiotics and environmental stresses. This is Antiholin-like protein LrgA from Staphylococcus epidermidis (strain ATCC 12228 / FDA PCI 1200).